Consider the following 391-residue polypeptide: Digeranylgeranylglycerophospholipid reductase (391 aa).

Positions 18, 37, 48, 49, 51, 98, 122, 279, 291, and 292 each coordinate FAD.

Belongs to the geranylgeranyl reductase family. DGGGPL reductase subfamily. The cofactor is FAD.

The enzyme catalyses a 2,3-bis-O-phytanyl-sn-glycerol 1-phospholipid + 8 A = a 2,3-bis-O-(geranylgeranyl)-sn-glycerol 1-phospholipid + 8 AH2. It carries out the reaction 2,3-bis-O-(phytanyl)-sn-glycerol 1-phosphate + 8 A = 2,3-bis-O-(geranylgeranyl)-sn-glycerol 1-phosphate + 8 AH2. It catalyses the reaction CDP-2,3-bis-O-(geranylgeranyl)-sn-glycerol + 8 AH2 = CDP-2,3-bis-O-(phytanyl)-sn-glycerol + 8 A. The catalysed reaction is archaetidylserine + 8 AH2 = 2,3-bis-O-phytanyl-sn-glycero-3-phospho-L-serine + 8 A. The protein operates within membrane lipid metabolism; glycerophospholipid metabolism. In terms of biological role, is involved in the reduction of 2,3-digeranylgeranylglycerophospholipids (unsaturated archaeols) into 2,3-diphytanylglycerophospholipids (saturated archaeols) in the biosynthesis of archaeal membrane lipids. Catalyzes the formation of archaetidic acid (2,3-di-O-phytanyl-sn-glyceryl phosphate) from 2,3-di-O-geranylgeranylglyceryl phosphate (DGGGP) via the hydrogenation of each double bond of the isoprenoid chains. Is also probably able to reduce double bonds of geranyl groups in CDP-2,3-bis-O-(geranylgeranyl)-sn-glycerol and archaetidylserine, thus acting at various stages in the biosynthesis of archaeal membrane lipids. This chain is Digeranylgeranylglycerophospholipid reductase, found in Methanocaldococcus jannaschii (strain ATCC 43067 / DSM 2661 / JAL-1 / JCM 10045 / NBRC 100440) (Methanococcus jannaschii).